We begin with the raw amino-acid sequence, 37 residues long: Bactericidin B-2 (37 aa).

At G37 the chain carries Glycine amide.

Belongs to the cecropin family.

The protein localises to the secreted. In terms of biological role, cecropins have lytic and antibacterial activity against several Gram-positive and Gram-negative bacteria. The protein is Bactericidin B-2 of Manduca sexta (Tobacco hawkmoth).